The chain runs to 195 residues: 2-amino-4-hydroxy-6-hydroxymethyldihydropteridine pyrophosphokinase (195 aa).

Belongs to the HPPK family.

It catalyses the reaction 6-hydroxymethyl-7,8-dihydropterin + ATP = (7,8-dihydropterin-6-yl)methyl diphosphate + AMP + H(+). It functions in the pathway cofactor biosynthesis; tetrahydrofolate biosynthesis; 2-amino-4-hydroxy-6-hydroxymethyl-7,8-dihydropteridine diphosphate from 7,8-dihydroneopterin triphosphate: step 4/4. Its function is as follows. Catalyzes the transfer of pyrophosphate from adenosine triphosphate (ATP) to 6-hydroxymethyl-7,8-dihydropterin, an enzymatic step in folate biosynthesis pathway. The protein is 2-amino-4-hydroxy-6-hydroxymethyldihydropteridine pyrophosphokinase (folK) of Synechocystis sp. (strain ATCC 27184 / PCC 6803 / Kazusa).